We begin with the raw amino-acid sequence, 92 residues long: Tachykinin-2 (92 aa).

Positions 1 to 22 (MIRVGLILCCIFIVGVFEASSA) are cleaved as a signal peptide. Residues 23-37 (DDILTAHNLIKRSEV) constitute a propeptide that is removed on maturation. Residue methionine 49 is modified to Methionine amide. Residues 52 to 92 (SEELTRRLIQHPGSMSETSKRGPPKKGDFNPNELKPESNIC) constitute a propeptide that is removed on maturation. A disordered region spans residues 61 to 92 (QHPGSMSETSKRGPPKKGDFNPNELKPESNIC).

It belongs to the tachykinin family. In terms of tissue distribution, expressed in the posterior salivary gland and more specifically in the mucus-secreting gland cells.

The protein localises to the secreted. Its function is as follows. Tachykinins are active peptides which excite neurons, evoke behavioral responses, are potent vasodilators and secretagogues, and contract (directly or indirectly) many smooth muscles. In Octopus vulgaris (Common octopus), this protein is Tachykinin-2.